The sequence spans 339 residues: MLRVAINGFGRIGRSVLRALYESDKRDKIEVVAVNELSQPEAMAHLFQYDSTHGRFQHKVTHDQEYPYSDVPDSSQDKVRILHQADLSLLPWQSLEVDLVLDCTGVYGSKSDGEKHITAGAKKVLFSHPGGSDLDNTIIYGVNHDTLLPEHRIVSNGSCTTNCIIPVIKAIDDAFGIDSGTITTIHSSMNDQQVIDAYHSDLRRTRAASQSIIPVDTKLHKGIERIFPKFSNKFEAISVRVPTVNVTAMDLSVTINTNVKVNDINQTIVNASRCTLHNIVDYTEAPLVSIDFNHDPHSAIVDGSQTRVSNGHLVKMLVWCDNEWGFANRMLDTALAMSK.

Position 11 to 12 (11 to 12 (RI)) interacts with NAD(+). Substrate contacts are provided by residues 158–160 (SCT), arginine 204, 217–218 (TK), and arginine 240. Cysteine 159 serves as the catalytic Nucleophile. Asparagine 322 serves as a coordination point for NAD(+).

It belongs to the glyceraldehyde-3-phosphate dehydrogenase family. Epd subfamily. In terms of assembly, homotetramer.

It is found in the cytoplasm. It carries out the reaction D-erythrose 4-phosphate + NAD(+) + H2O = 4-phospho-D-erythronate + NADH + 2 H(+). Its pathway is cofactor biosynthesis; pyridoxine 5'-phosphate biosynthesis; pyridoxine 5'-phosphate from D-erythrose 4-phosphate: step 1/5. In terms of biological role, catalyzes the NAD-dependent conversion of D-erythrose 4-phosphate to 4-phosphoerythronate. In Aliivibrio fischeri (strain ATCC 700601 / ES114) (Vibrio fischeri), this protein is D-erythrose-4-phosphate dehydrogenase.